Consider the following 341-residue polypeptide: DNA-directed RNA polymerase subunit alpha (341 aa).

The alpha N-terminal domain (alpha-NTD) stretch occupies residues 1 to 233 (MVREEVPVST…DLFIPFLHAE (233 aa)). Residues 266–341 (IILKRIFIDQ…LKNSNQFESR (76 aa)) are alpha C-terminal domain (alpha-CTD).

This sequence belongs to the RNA polymerase alpha chain family. As to quaternary structure, in plastids the minimal PEP RNA polymerase catalytic core is composed of four subunits: alpha, beta, beta', and beta''. When a (nuclear-encoded) sigma factor is associated with the core the holoenzyme is formed, which can initiate transcription.

The protein resides in the plastid. It localises to the chloroplast. The catalysed reaction is RNA(n) + a ribonucleoside 5'-triphosphate = RNA(n+1) + diphosphate. Its function is as follows. DNA-dependent RNA polymerase catalyzes the transcription of DNA into RNA using the four ribonucleoside triphosphates as substrates. The chain is DNA-directed RNA polymerase subunit alpha from Nymphaea alba (White water-lily).